A 196-amino-acid chain; its full sequence is Large ribosomal subunit protein eL15 (196 aa).

Positions 162 to 172 (RGKTSAGRRAR) are enriched in basic residues. Residues 162–196 (RGKTSAGRRARGLQNRGKGTEGLRPSTNADKRNKS) form a disordered region.

It belongs to the eukaryotic ribosomal protein eL15 family.

This Halobacterium salinarum (strain ATCC 29341 / DSM 671 / R1) protein is Large ribosomal subunit protein eL15.